The sequence spans 524 residues: Coronin-2A (524 aa).

WD repeat units lie at residues 80–120 (GHRG…LTRN), 130–170 (GHAR…SVIA), 178–217 (CHQDVILSMSFNTNGSLLATTCKDRKIRIVDPRLGIVLQE), 220–263 (YKGH…VPLT), and 269–308 (GSSGVLFPFFDSDTSMLYIVGKGDGNIRYYEVSMEKPHLT). The segment at 403–436 (LLDSQTLPPERPLSNSMVQVSPQPLEPMKQPAED) is disordered. Positions 404–424 (LDSQTLPPERPLSNSMVQVSP) are enriched in polar residues. A coiled-coil region spans residues 484-523 (QMFYRQQEEIRRLRELLIQREVQTKQLELEIKNLRMALGQ).

This sequence belongs to the WD repeat coronin family. Binds actin. Component of the N-Cor repressor complex, at least composed of NCOR1, NCOR2, HDAC3, TBL1X, TBL1R, CORO2A and GPS2.

This is Coronin-2A (Coro2a) from Mus musculus (Mouse).